Here is a 362-residue protein sequence, read N- to C-terminus: Microfibril-associated glycoprotein 3 (362 aa).

The signal sequence occupies residues methionine 1 to alanine 19. Topologically, residues phenylalanine 20–aspartate 146 are extracellular. 3 N-linked (GlcNAc...) asparagine glycosylation sites follow: asparagine 36, asparagine 41, and asparagine 110. Positions proline 45 to threonine 137 constitute an Ig-like C2-type domain. Cysteines 73 and 124 form a disulfide. The chain crosses the membrane as a helical span at residues methionine 147–valine 167. The Cytoplasmic segment spans residues threonine 168–leucine 362. 2 disordered regions span residues glycine 282–asparagine 306 and histidine 319–leucine 362. Residues histidine 319–phenylalanine 337 are compositionally biased toward polar residues.

In terms of processing, glycosylated.

The protein resides in the cell membrane. In terms of biological role, component of the elastin-associated microfibrils. The sequence is that of Microfibril-associated glycoprotein 3 (MFAP3) from Pongo abelii (Sumatran orangutan).